The primary structure comprises 289 residues: MAETTASGYIQHHLQNLTFGQLPNGGWGFAHSAAEAKEMGFWAFHLDTLGWSVALGLIFVLIFRMAAKKATSGQPGALQNFVEVLVEFVDGSVKDSFHGRSPVIAPLALTIFVWVFLMNAVDLIPVDWIPQLAILITGDAHIPFRAVSTTDPNATLGMALSVFALIIFYSIKVKGIGGFIGELTLHPFGSKNIFVQALLIPVNFLLEFVTLIAKPISLALRLFGNMYAGELVFILIAVMFGSGLLWLSGLGVVLQWAWAVFHILIITLQAFIFMMLTIVYLSMAHEENH.

6 consecutive transmembrane segments (helical) span residues 43-63 (AFHL…VLIF), 104-124 (IAPL…VDLI), 160-180 (LSVF…GGFI), 193-213 (IFVQ…TLIA), 232-252 (VFIL…GLGV), and 259-279 (AVFH…LTIV).

Belongs to the ATPase A chain family. In terms of assembly, F-type ATPases have 2 components, CF(1) - the catalytic core - and CF(0) - the membrane proton channel. CF(1) has five subunits: alpha(3), beta(3), gamma(1), delta(1), epsilon(1). CF(0) has three main subunits: a(1), b(2) and c(9-12). The alpha and beta chains form an alternating ring which encloses part of the gamma chain. CF(1) is attached to CF(0) by a central stalk formed by the gamma and epsilon chains, while a peripheral stalk is formed by the delta and b chains.

The protein resides in the cell inner membrane. Functionally, key component of the proton channel; it plays a direct role in the translocation of protons across the membrane. The chain is ATP synthase subunit a from Pseudomonas fluorescens (strain SBW25).